The chain runs to 169 residues: Major pepsin inhibitor 3 (169 aa).

An N-terminal signal peptide occupies residues 1–20; sequence MHVWLILSLASLWTSSIAYS. Glutamine 21 is modified (pyrrolidone carboxylic acid). 3 disulfides stabilise this stretch: cysteine 33/cysteine 79, cysteine 68/cysteine 86, and cysteine 99/cysteine 166. Positions 135 to 169 are disordered; it reads EEQQENQPPSSGMPHGAVPAGGLSPPPPPSFCTVQ. Pro residues predominate over residues 158–169; that stretch reads SPPPPPSFCTVQ.

The protein belongs to the protease inhibitor I33 family. As to expression, body wall.

The protein resides in the secreted. In terms of biological role, this is an inhibitor of the aspartic protease pepsin. The polypeptide is Major pepsin inhibitor 3 (Ascaris suum (Pig roundworm)).